Here is a 609-residue protein sequence, read N- to C-terminus: Glutamine--fructose-6-phosphate aminotransferase [isomerizing] (609 aa).

Cysteine 2 acts as the Nucleophile; for GATase activity in catalysis. Positions 2 to 218 (CGIVGAVAQR…EGDIAEVTRR (217 aa)) constitute a Glutamine amidotransferase type-2 domain. SIS domains are found at residues 286–426 (AAKL…LKGV) and 458–599 (LAED…VDQP). Lysine 604 acts as the For Fru-6P isomerization activity in catalysis.

In terms of assembly, homodimer.

It localises to the cytoplasm. It catalyses the reaction D-fructose 6-phosphate + L-glutamine = D-glucosamine 6-phosphate + L-glutamate. Its function is as follows. Catalyzes the first step in hexosamine metabolism, converting fructose-6P into glucosamine-6P using glutamine as a nitrogen source. The sequence is that of Glutamine--fructose-6-phosphate aminotransferase [isomerizing] from Photorhabdus laumondii subsp. laumondii (strain DSM 15139 / CIP 105565 / TT01) (Photorhabdus luminescens subsp. laumondii).